Consider the following 177-residue polypeptide: Large ribosomal subunit protein uL6 (177 aa).

It belongs to the universal ribosomal protein uL6 family. Part of the 50S ribosomal subunit.

Its function is as follows. This protein binds to the 23S rRNA, and is important in its secondary structure. It is located near the subunit interface in the base of the L7/L12 stalk, and near the tRNA binding site of the peptidyltransferase center. This is Large ribosomal subunit protein uL6 from Magnetococcus marinus (strain ATCC BAA-1437 / JCM 17883 / MC-1).